Reading from the N-terminus, the 130-residue chain is Putative F-box protein At1g77880 (130 aa).

In terms of domain architecture, F-box spans 18 to 64 (KVSIPYLPDDLLLNCLARISRLYYPTLSLVSKRFRSLLASTELYETR).

This chain is Putative F-box protein At1g77880, found in Arabidopsis thaliana (Mouse-ear cress).